We begin with the raw amino-acid sequence, 229 residues long: Matrix protein (229 aa).

The span at methionine 1–leucine 10 shows a compositional bias: low complexity. Residues methionine 1–alanine 23 are disordered. The short motif at serine 2–leucine 4 is the dynamin binding element. The PPXY motif signature appears at proline 24–tyrosine 27. The PTAP/PSAP motif motif lies at proline 37–proline 40.

The protein belongs to the vesiculoviruses matrix protein family. As to quaternary structure, homomultimer. Interacts with viral nucleocapsid; this interaction contributes to the virion assembly. Interacts with the viral envelope glycoprotein; this interaction contributes to the virion assembly. Interacts with host RAE1-NUP98 complex. Interacts with host NEDD4 and TSG101. Interacts with host dynamin. Interacts with host NDUFAF4; the interaction inhibits viral propagation and is independent of interferon activation. Interacts with host GTF2H5; the interaction may inhibit host transcription. In terms of processing, phosphorylated by host.

Its subcellular location is the virion. The protein resides in the host endomembrane system. The protein localises to the host nucleus membrane. It localises to the host nucleus. It is found in the host cytoplasm. In terms of biological role, forms a double layer around the helical nucleocapsid, the inner matrix layer binding to the N helix and the outer matrix layer binding to the envelope glycoprotein. Plays a major role in assembly and budding of virion, by recruiting cellular partners of the ESCRT complexes that play a key role in releasing the budding particle from the host membrane. Condensates the ribonucleocapsid core during virus assembly. Inhibits the host mRNA nuclear export thereby inducing the shut off of cellular transcription and preventing the interferon signaling and the establishment of antiviral state in infected cells. This shutoff presumably inhibits interferon signaling and thus establishment of antiviral state in virus infected cells. Induces cell-rounding, cytoskeleton disorganization and apoptosis in infected cell. Inhibits host transcription, possibly through interaction with host DNA repair factor IIH/TFIIH GTF2H5 subunit. This Vesicular stomatitis Indiana virus (strain 98COE North America) (VSIV) protein is Matrix protein (M).